The chain runs to 200 residues: High mobility group protein B3 (200 aa).

An N6-acetyllysine modification is found at lysine 3. 2 consecutive DNA-binding regions (HMG box) follow at residues 9 to 79 (PKGK…KDYG) and 93 to 161 (PKRP…ADYK). A Cysteine sulfonic acid (-SO3H); alternate modification is found at cysteine 23. Cysteines 23 and 45 form a disulfide. N6-acetyllysine occurs at positions 30 and 43. The residue at position 45 (cysteine 45) is a Cysteine sulfonic acid (-SO3H); alternate. A disordered region spans residues 71 to 97 (YDREMKDYGPAKGGKKKKDPNAPKRPP). Position 98 is a phosphoserine (serine 98). Cysteine 104 is modified (cysteine sulfonic acid (-SO3H)). N6-acetyllysine is present on residues lysine 112 and lysine 139. Residues 161–200 (KSKGKFDGAKGPAKVARKKVEEEEEEEEEEEEEEEEEEDE) are disordered. The span at 182–200 (EEEEEEEEEEEEEEEEEDE) shows a compositional bias: acidic residues.

This sequence belongs to the HMGB family. Post-translationally, reduction/oxidation of cysteine residues Cys-23, Cys-45 and Cys-104 and a possible intramolecular disulfide bond involving Cys-23 and Cys-45 give rise to different redox forms with specific functional activities in various cellular compartments: 1- fully reduced HMGB3 (HMGB3C23hC45hC104h), 2- disulfide HMGB3 (HMGB3C23-C45C104h) and 3- sulfonyl HMGB3 (HMGB3C23soC45soC104so). As to expression, expressed in bone marrow cells, specifically in primitive Lin-, c-kit+, Sca-1+, IL-7Ralpha- cells, and Ter119+ erythroid cells.

Its subcellular location is the nucleus. It is found in the chromosome. The protein resides in the cytoplasm. Functionally, multifunctional protein with various roles in different cellular compartments. May act in a redox sensitive manner. Associates with chromatin and binds DNA with a preference for non-canonical DNA structures such as single-stranded DNA. Can bend DNA and enhance DNA flexibility by looping thus providing a mechanism to promote activities on various gene promoters. Proposed to be involved in the innate immune response to nucleic acids by acting as a cytoplasmic promiscuous immunogenic DNA/RNA sensor. Negatively regulates B-cell and myeloid cell differentiation. In hematopoietic stem cells may regulate the balance between self-renewal and differentiation. Involved in negative regulation of canonical Wnt signaling. The chain is High mobility group protein B3 (Hmgb3) from Mus musculus (Mouse).